The chain runs to 867 residues: Xylosyltransferase 2 (867 aa).

Residues 1 to 15 (MVASARVQKLVRRYK) are Cytoplasmic-facing. Residues 16-36 (LAIATALAILLLQGLVVWSFS) traverse the membrane as a helical; Signal-anchor for type II membrane protein segment. At 37–867 (VLEDDEPGEK…GPVKADGRLR (831 aa)) the chain is on the lumenal side. Residues 41-122 (DEPGEKGRQK…PPPEAPGRQN (82 aa)) form a disordered region. Basic and acidic residues predominate over residues 53-65 (RPLDPSEGSKDTD). The segment covering 73-82 (SAGRRHGRWR) has biased composition (basic residues). A glycan (N-linked (GlcNAc...) asparagine) is linked at Asn122. Cystine bridges form between Cys161–Cys189 and Cys205–Cys447. UDP-alpha-D-xylose is bound by residues Val238, Asp266, and 295 to 297 (TIW). N-linked (GlcNAc...) asparagine glycosylation is present at Asn326. UDP-alpha-D-xylose contacts are provided by residues 399 to 400 (DW), Ser480, and 503 to 504 (RK). Intrachain disulfides connect Cys580–Cys835 and Cys828–Cys841. Asn685 is a glycosylation site (N-linked (GlcNAc...) asparagine).

The protein belongs to the glycosyltransferase 14 family. XylT subfamily. Monomer. Requires Mg(2+) as cofactor. Mn(2+) serves as cofactor. Contains disulfide bonds.

Its subcellular location is the golgi apparatus membrane. The protein resides in the secreted. The enzyme catalyses UDP-alpha-D-xylose + L-seryl-[protein] = 3-O-(beta-D-xylosyl)-L-seryl-[protein] + UDP + H(+). It participates in glycan metabolism; chondroitin sulfate biosynthesis. The protein operates within glycan metabolism; heparan sulfate biosynthesis. Its function is as follows. Catalyzes the first step in the biosynthesis of chondroitin sulfate, heparan sulfate and dermatan sulfate proteoglycans, such as DCN. Transfers D-xylose from UDP-D-xylose to specific serine residues of the core protein. This is Xylosyltransferase 2 (XYLT2) from Bos taurus (Bovine).